The primary structure comprises 732 residues: MSEQSKCPVTGRTAGNPVAGGSMLNRDWWPNQLHLDMLHQHSSLVNPMGDEFRYKEEFRKLDLGAVKKDLYALMTDSQEWWPADYGHYGGLFIRMAWHSAGTYRTSDGRGGGGRGNQRFAPLNSWPDNANLDKARRLLWPIKQKYGKMLSWADLMILAGNCALESMGFKTFGFGGGRVDIWEPEEDIYWGKEVEWLGNNRYSGERDLENPLAAVQMGLIYVNPEGPDGNPDPVAAGRDIRETFARMAMNDEETVALVAGGHTFGKCHGVGDPNLIGPEPEAAGIEEQGLGWKSGYGSGKGDETMTSGLEGAWTPDPIHWDMGYLGMLFKYEWELTKSPAGAWQWKPKDVAEEDLAPAAHDPSKRVPTMMTTADLAMRMDPVYGPISRRYYEHPDQFADAFARAWFKLTHRDMGPKSRYLGAEVPAEDLIWQDPVPAVDHELIGEGEIAELKKRLLASGLPIPELVSTTWASASTFRGSDKRGGANGSRIRLAPQKDWEVNQPEQLQRVLEKLEEIRHAFNGEQSGGKRVSLADLIVLGGCAAVEEAARRAGNDVTIPFAPGRTDASQAETDVESFAVLEPLADGFRNYARQKYSVTPEEMLVDRSQLLTLTATEMTVLLGGLRVLGANFRQSPHGVFTKRHETLTNDFFVNLLDMGTEWKPVSKEHDTFEGRDRKTGEPRWSATRVDLIFGSNARLRAIAEVYGSDDAQEKFVQDFVAAWNKVMNLDRFEIS.

Residues 97–220 (WHSAGTYRTS…LAAVQMGLIY (124 aa)) constitute a cross-link (tryptophyl-tyrosyl-methioninium (Trp-Tyr) (with M-246)). His-98 functions as the Proton acceptor in the catalytic mechanism. Residues 220 to 246 (YVNPEGPDGNPDPVAAGRDIRETFARM) constitute a cross-link (tryptophyl-tyrosyl-methioninium (Tyr-Met) (with W-97)). His-261 contributes to the heme b binding site.

The protein belongs to the peroxidase family. Peroxidase/catalase subfamily. As to quaternary structure, homodimer or homotetramer. The cofactor is heme b. In terms of processing, formation of the three residue Trp-Tyr-Met cross-link is important for the catalase, but not the peroxidase activity of the enzyme.

It catalyses the reaction H2O2 + AH2 = A + 2 H2O. It carries out the reaction 2 H2O2 = O2 + 2 H2O. Its function is as follows. Bifunctional enzyme with both catalase and broad-spectrum peroxidase activity. The chain is Catalase-peroxidase from Chlorobium phaeobacteroides (strain DSM 266 / SMG 266 / 2430).